We begin with the raw amino-acid sequence, 180 residues long: Large ribosomal subunit protein uL5 (180 aa).

Belongs to the universal ribosomal protein uL5 family. In terms of assembly, part of the 50S ribosomal subunit; part of the 5S rRNA/L5/L18/L25 subcomplex. Contacts the 5S rRNA and the P site tRNA. Forms a bridge to the 30S subunit in the 70S ribosome.

This is one of the proteins that bind and probably mediate the attachment of the 5S RNA into the large ribosomal subunit, where it forms part of the central protuberance. In the 70S ribosome it contacts protein S13 of the 30S subunit (bridge B1b), connecting the 2 subunits; this bridge is implicated in subunit movement. Contacts the P site tRNA; the 5S rRNA and some of its associated proteins might help stabilize positioning of ribosome-bound tRNAs. This chain is Large ribosomal subunit protein uL5, found in Ralstonia pickettii (strain 12J).